A 271-amino-acid chain; its full sequence is Undecaprenyl-diphosphatase (271 aa).

Helical transmembrane passes span 2 to 22 (LLILKAIILAIVEGLTEFVPV), 42 to 62 (ANLFNVVIQLGAILAVVVVYW), 80 to 100 (LRFWINIVVACIPAVIFGFSL), 108 to 128 (LFNPITVAIGLVIGGILMIIV), 149 to 168 (SIFVGMFQCLALWPGMSRSA), 175 to 195 (WIAGLSPVVAAEFSFFLAIPV), 214 to 234 (IEFIALIVGFVGAFLVSLVVI), and 248 to 268 (IFAIYRIFIGAILLILAIFKI).

It belongs to the UppP family.

It localises to the cell membrane. The catalysed reaction is di-trans,octa-cis-undecaprenyl diphosphate + H2O = di-trans,octa-cis-undecaprenyl phosphate + phosphate + H(+). In terms of biological role, catalyzes the dephosphorylation of undecaprenyl diphosphate (UPP). Confers resistance to bacitracin. This is Undecaprenyl-diphosphatase from Clostridium tetani (strain Massachusetts / E88).